Here is a 96-residue protein sequence, read N- to C-terminus: UPF0235 protein YggU (96 aa).

The protein belongs to the UPF0235 family.

This is UPF0235 protein YggU from Escherichia coli O127:H6 (strain E2348/69 / EPEC).